We begin with the raw amino-acid sequence, 219 residues long: Epididymal secretory glutathione peroxidase (219 aa).

An N-terminal signal peptide occupies residues 1–21 (MTVQLGAFYLFPLFMAGFVQT). Cysteine 71 is an active-site residue.

Belongs to the glutathione peroxidase family. As to quaternary structure, homotetramer. In terms of tissue distribution, proximal caput epididymis.

It localises to the secreted. The enzyme catalyses 2 glutathione + H2O2 = glutathione disulfide + 2 H2O. In terms of biological role, may constitute a glutathione peroxidase-like protective system against peroxide damage in sperm membrane lipids. Since the purified porcine enzyme has very little activity towards hydrogen peroxide or organic hydroperoxides the protective effect is not likely to be exerted by its enzymatic activity. Instead, may protect sperm from premature acrosome reaction in the epididymis by binding to lipid peroxides, which might otherwise interact with phospholipase A2 and induce the acrosome reaction. This Sus scrofa (Pig) protein is Epididymal secretory glutathione peroxidase (GPX5).